Here is a 367-residue protein sequence, read N- to C-terminus: Heparan sulfate glucosamine 3-O-sulfotransferase 2 (367 aa).

At 1–19 (MAYRVLGRAGPPQPRRARR) the chain is on the cytoplasmic side. The helical; Signal-anchor for type II membrane protein transmembrane segment at 20 to 39 (LLFAFTLSLSCTYLCYSFLC) threads the bilayer. Residues 40-367 (CCDDLGRSRL…ETVGQDFRWE (328 aa)) lie on the Lumenal side of the membrane. Residues 61–110 (AGGQKLLQKSRPCDPSGPTPSEPSAPSAPAAAVPAPRLSGSNHSGSPKLG) form a disordered region. Residues 84–96 (SAPSAPAAAVPAP) show a composition bias toward low complexity. Asn-102 carries an N-linked (GlcNAc...) asparagine glycan. 124–128 (KGGTR) serves as a coordination point for 3'-phosphoadenylyl sulfate. Residues 146-152 (EPHFFDR) and 177-180 (KTPS) each bind substrate. Asn-193 carries N-linked (GlcNAc...) asparagine glycosylation. 3'-phosphoadenylyl sulfate-binding residues include Arg-205 and Ser-213. Residue Asn-235 is glycosylated (N-linked (GlcNAc...) asparagine). 245–246 (WN) provides a ligand contact to substrate. Residue Asn-306 is glycosylated (N-linked (GlcNAc...) asparagine). The cysteines at positions 313 and 325 are disulfide-linked. A 3'-phosphoadenylyl sulfate-binding site is contributed by 330–334 (KGRTH).

The protein belongs to the sulfotransferase 1 family. Highly expressed in the brain and weakly expressed in the heart, placenta, lung and skeletal muscle.

The protein resides in the golgi apparatus membrane. The catalysed reaction is alpha-D-glucosaminyl-[heparan sulfate](n) + 3'-phosphoadenylyl sulfate = 3-sulfo-alpha-D-glucosaminyl-[heparan sulfate](n) + adenosine 3',5'-bisphosphate + H(+). Functionally, sulfotransferase that utilizes 3'-phospho-5'-adenylyl sulfate (PAPS) to catalyze the transfer of a sulfo group to an N-unsubstituted glucosamine linked to a 2-O-sulfo iduronic acid unit on heparan sulfate. Catalyzes the O-sulfation of glucosamine in GlcA2S-GlcNS. Unlike HS3ST1/3-OST-1, does not convert non-anticoagulant heparan sulfate to anticoagulant heparan sulfate. The polypeptide is Heparan sulfate glucosamine 3-O-sulfotransferase 2 (HS3ST2) (Homo sapiens (Human)).